The chain runs to 269 residues: Arginine and glutamate-rich protein 1-B (269 aa).

Basic residues predominate over residues 1–57 (MGRSRSRSSSRSKHSKTSKHSKKRSRSRSRSRDRERKRRSKSRESKRNRRRESRSRS). The tract at residues 1–70 (MGRSRSRSSS…TATSRRDRER (70 aa)) is necessary and sufficient for RNA binding. 2 disordered regions span residues 1–109 (MGRS…MERQ) and 233–269 (RMKL…KASE). Composition is skewed to basic and acidic residues over residues 64-80 (SRRD…RIDI), 89-109 (SAVD…MERQ), and 233-249 (RMKL…EEQK). Positions 71–269 (AASPPERIDI…KLSFSLKASE (199 aa)) are necessary and sufficient for transcriptional regulation.

The protein belongs to the ARGLU1 family.

It localises to the nucleus. The protein resides in the nucleus speckle. The protein localises to the chromosome. Dual function regulator of gene expression; regulator of transcription and modulator of alternative splicing. General coactivator of nuclear receptor-induced gene expression. This is Arginine and glutamate-rich protein 1-B (arglu1b) from Danio rerio (Zebrafish).